A 323-amino-acid polypeptide reads, in one-letter code: Sphingolipid delta(4)-desaturase DES1 (323 aa).

Gly2 carries the N-myristoyl glycine lipid modification. A run of 2 helical transmembrane segments spans residues 41–61 (PNLI…FYLV) and 68–88 (WLMF…TLAI). Positions 89–93 (HEISH) match the Histidine box-1 motif. A helical membrane pass occupies residues 104-124 (WNRWFGMFANLSLGVPYSISF). A Histidine box-2 motif is present at residues 128-132 (HMDHH). 3 helical membrane passes run 152–172 (FFCT…FYAF), 184–204 (HLEV…YYVF), and 210–230 (VYML…GHFI). Positions 259-263 (HNEHH) match the Histidine box-3 motif. Phosphoserine is present on Ser307.

Belongs to the fatty acid desaturase type 1 family. DEGS subfamily. As to quaternary structure, interacts with RLBP1; the interaction increases synthesis of chromophore-precursors by DEGS1. Post-translationally, myristoylation can target the enzyme to the mitochondria leading to an increase in ceramide levels.

It localises to the mitochondrion membrane. Its subcellular location is the endoplasmic reticulum membrane. The catalysed reaction is an N-acylsphinganine + 2 Fe(II)-[cytochrome b5] + O2 + 2 H(+) = an N-acylsphing-4-enine + 2 Fe(III)-[cytochrome b5] + 2 H2O. The enzyme catalyses all-trans-retinol = 11-cis-retinol. It carries out the reaction all-trans-retinol = 9-cis-retinol. It catalyses the reaction all-trans-retinol = 13-cis-retinol. The catalysed reaction is 11-cis-retinol = 13-cis-retinol. The enzyme catalyses 11-cis-retinol = 9-cis-retinol. In terms of biological role, has sphingolipid-delta-4-desaturase activity. Converts D-erythro-sphinganine to D-erythro-sphingosine (E-sphing-4-enine). Catalyzes the equilibrium isomerization of retinols. The chain is Sphingolipid delta(4)-desaturase DES1 from Rattus norvegicus (Rat).